Consider the following 547-residue polypeptide: MAELTIRPEEIRDALQRFVQSYEPDAAAREEIGTVTYSGDGIARVSGLPSAMANELLEFEDGTQGIAQNLEIGEIGVVVLGDFTNIAEGQTVRRTGQVLSVPVGDAYLGRVVDPLGRPIDGKGEIETTERRELELQAATVMQRKPVHEPLQTGIKAIDALTPIGRGQRQLIIGDRQTGKTAVCIDTIINQKANWESGDPNKQVRCIYVAVGQKGSTIAGVRAALEEAGAMEYTTIVASPASDPAGFKYIAPYTGSAIGQHWMYQGKHVLIVFDDLTKQAEAYRAVSLLLRRPPGREAYPGDVFYLHSRLLERCAKLSDEMGAGSLTGLPIIETKANDVSAYIPTNVISITDGQVFLESDLFNQGQRPAINVGISVSRVGGAAQTKAMKKVVGSLRVGLAQYRDLEAFAAFGSDLDAASKAQLERGARLMELLKQGQYSPFPMEEEVVSIWAGTTGHLDDVPVEDIRRFESEFLAYLRREHSKILDVIRETEDFGDDTAEALTDAIKEFKKTFQTSDGTILGTEAPAEALDESEVGQETIKVAKTSGK.

173 to 180 (GDRQTGKT) is a binding site for ATP.

This sequence belongs to the ATPase alpha/beta chains family. As to quaternary structure, F-type ATPases have 2 components, CF(1) - the catalytic core - and CF(0) - the membrane proton channel. CF(1) has five subunits: alpha(3), beta(3), gamma(1), delta(1), epsilon(1). CF(0) has three main subunits: a(1), b(2) and c(9-12). The alpha and beta chains form an alternating ring which encloses part of the gamma chain. CF(1) is attached to CF(0) by a central stalk formed by the gamma and epsilon chains, while a peripheral stalk is formed by the delta and b chains.

It localises to the cell membrane. The catalysed reaction is ATP + H2O + 4 H(+)(in) = ADP + phosphate + 5 H(+)(out). In terms of biological role, produces ATP from ADP in the presence of a proton gradient across the membrane. The alpha chain is a regulatory subunit. The chain is ATP synthase subunit alpha from Thermobifida fusca (strain YX).